We begin with the raw amino-acid sequence, 359 residues long: MSFTAPSDPVNKPTKVKVSQLCELCHSRKALIRRPKNLSKLCKQCFCLVFETEIHNTIVANNLFQRGEKVAVGASGGKDSTVLAHMLKLLNDRYDYGIEIVLLSIDEGIIGYRDDSLATVKRNQQQYGLPLEIFSFKDLYDWTMDEIVSVAGIRNSCTYCGVFRRQSLDRGAAKLGISHVVTGHNADDMAETVLMNILRGDVARLEKSTAIITQSSGSPIKRSKPFKYSYQKEIVLYAHYMKLDYFSTECTYAPEAFRGTAREYMKNLEAVRPSCIIDIIQSGENLALKAKKSNARKRVVKFVDGNRCARCGYLSSNNICKACMLLEGLEKSRAQVAIENDTSADGAALKLRALEKLSF.

It belongs to the TtcA family. CTU1/NCS6/ATPBD3 subfamily. In terms of assembly, interacts with NCS2 and URM1. May act by forming a heterodimer with NCS2. Component of a large molecular weight complex of more than 250 kDa.

Its subcellular location is the cytoplasm. The protein localises to the mitochondrion. It functions in the pathway tRNA modification; 5-methoxycarbonylmethyl-2-thiouridine-tRNA biosynthesis. Functionally, plays a central role in 2-thiolation of mcm(5)S(2)U at tRNA wobble positions of tRNA(Lys), tRNA(Glu) and tRNA(Gln). Directly binds tRNAs and probably acts by catalyzing adenylation of tRNAs, an intermediate required for 2-thiolation. It is unclear whether it acts as a sulfurtransferase that transfers sulfur from thiocarboxylated URM1 onto the uridine of tRNAs at wobble position. Prior mcm(5) tRNA modification by the elongator complex is required for 2-thiolation. May also be involved in protein urmylation. The protein is Cytoplasmic tRNA 2-thiolation protein 1 of Saccharomyces cerevisiae (strain RM11-1a) (Baker's yeast).